Consider the following 205-residue polypeptide: Lymphotoxin-alpha (205 aa).

The N-terminal stretch at 1–34 (MTPPERLFLPRVCGTTLHLLLLGLLLVLLPGAQG) is a signal peptide. O-linked (GalNAc...) threonine; partial glycosylation is present at Thr-41. The THD domain occupies 63 to 205 (PAAHLIGDPS…STVFFGAFAL (143 aa)). The N-linked (GlcNAc...) asparagine glycan is linked to Asn-96.

This sequence belongs to the tumor necrosis factor family. Homotrimer, and heterotrimer of either two LTB and one LTA subunits or (less prevalent) two LTA and one LTB subunits. Interacts with TNFRSF14.

It is found in the secreted. The protein localises to the membrane. Functionally, cytokine that in its homotrimeric form binds to TNFRSF1A/TNFR1, TNFRSF1B/TNFBR and TNFRSF14/HVEM. In its heterotrimeric form with LTB binds to TNFRSF3/LTBR. Lymphotoxin is produced by lymphocytes and is cytotoxic for a wide range of tumor cells in vitro and in vivo. The protein is Lymphotoxin-alpha (LTA) of Homo sapiens (Human).